A 248-amino-acid chain; its full sequence is Ribosomal RNA small subunit methyltransferase J (248 aa).

Residues 98 to 99 (RD), 114 to 115 (ER), 150 to 151 (SS), and Asp168 each bind S-adenosyl-L-methionine.

It belongs to the methyltransferase superfamily. RsmJ family.

The protein resides in the cytoplasm. The enzyme catalyses guanosine(1516) in 16S rRNA + S-adenosyl-L-methionine = N(2)-methylguanosine(1516) in 16S rRNA + S-adenosyl-L-homocysteine + H(+). Functionally, specifically methylates the guanosine in position 1516 of 16S rRNA. The chain is Ribosomal RNA small subunit methyltransferase J from Shewanella amazonensis (strain ATCC BAA-1098 / SB2B).